The chain runs to 321 residues: Mas-related G-protein coupled receptor member D (321 aa).

The Extracellular segment spans residues 1–33 (MNQTLNSSGTVESALNYSRGSTVHTAYLVLSSL). N-linked (GlcNAc...) asparagine glycans are attached at residues asparagine 2, asparagine 6, and asparagine 16. A helical transmembrane segment spans residues 34–54 (AMFTCLCGMAGNSMVIWLLGF). The Cytoplasmic portion of the chain corresponds to 55-59 (RMHRN). Residues 60-80 (PFCIYILNLAAADLLFLFSMA) traverse the membrane as a helical segment. Topologically, residues 81 to 112 (STLSLETQPLVNTTDKVHELMKRLMYFAYTVG) are extracellular. N-linked (GlcNAc...) asparagine glycosylation occurs at asparagine 92. The helical transmembrane segment at 113–133 (LSLLTAISTQRCLSVLFPIWF) threads the bilayer. At 134–142 (KCHRPRHLS) the chain is on the cytoplasmic side. A helical transmembrane segment spans residues 143 to 163 (AWVCGLLWTLCLLMNGLTSSF). Topologically, residues 164-184 (CSKFLKFNEDRCFRVDMVQAA) are extracellular. Residues 185-205 (LIMGVLTPVMTLSSLTLFVWV) traverse the membrane as a helical segment. Residues 206-218 (RRSSQQWRRQPTR) lie on the Cytoplasmic side of the membrane. Residues 219–239 (LFVVVLASVLVFLICSLPLSI) traverse the membrane as a helical segment. The Extracellular portion of the chain corresponds to 240–257 (YWFVLYWLSLPPEMQVLC). The helical transmembrane segment at 258–280 (FSLSRLSSSVSSSANPVIYFLVG) threads the bilayer. Residues 281–321 (SRRSHRLPTRSLGTVLQQALREEPELEGGETPTVGTNEMGA) are Cytoplasmic-facing. The segment at 302 to 321 (EEPELEGGETPTVGTNEMGA) is disordered.

Belongs to the G-protein coupled receptor 1 family. Mas subfamily.

The protein resides in the cell membrane. In terms of biological role, may regulate nociceptor function and/or development, including the sensation or modulation of pain. Functions as a specific membrane receptor for beta-alanine. Beta-alanine at micromolar doses specifically evoked Ca(2+) influx in cells expressing the receptor. Beta-alanine decreases forskolin-stimulated cAMP production in cells expressing the receptor, suggesting that the receptor couples with G-protein G(q) and G(i). This chain is Mas-related G-protein coupled receptor member D (MRGPRD), found in Homo sapiens (Human).